The sequence spans 553 residues: Interleukin-20 receptor subunit alpha (553 aa).

The N-terminal stretch at 1-29 (MRAPGRPALRPLPLPPLLLLLLAAPWGRA) is a signal peptide. Residues 30–250 (VPCVSGGLPK…KDQSSEFKAK (221 aa)) are Extracellular-facing. Fibronectin type-III domains follow at residues 37 to 135 (LPKP…FLET) and 136 to 242 (QIGP…TLKD). Residues Asn-42, Asn-83, Asn-91, Asn-182, Asn-191, and Asn-200 are each glycosylated (N-linked (GlcNAc...) asparagine). Cys-87 and Cys-95 are joined by a disulfide. Residues Cys-215 and Cys-236 are joined by a disulfide bond. The chain crosses the membrane as a helical span at residues 251–271 (IIFWYVLPVSITVFLFSVMGY). At 272 to 553 (SIYRYIHVGK…EWGLYVQMEN (282 aa)) the chain is on the cytoplasmic side. Disordered stretches follow at residues 333-353 (SSDVSSLNDPQPSGNLRPPQE) and 462-515 (QEHT…LGEE). Residues 334–346 (SDVSSLNDPQPSG) are compositionally biased toward polar residues. The segment covering 499–513 (QDSEGCEPSEGDGLG) has biased composition (acidic residues).

Belongs to the type II cytokine receptor family. Heterodimer with IL20RB and heterodimer with IL10RB. Widely expressed with highest levels in skin and testis and high levels in brain. Highly expressed in psoriatic skin.

It is found in the membrane. In terms of biological role, the IL20RA/IL20RB dimer is a receptor for IL19, IL20 and IL24. The IL20RA/IL10RB dimer is a receptor for IL26. The polypeptide is Interleukin-20 receptor subunit alpha (IL20RA) (Homo sapiens (Human)).